Here is a 698-residue protein sequence, read N- to C-terminus: MAAADALANVRNIGIMAHIDAGKTTTTERILFYTGITYKIGEVHEGAAVMDWMAQEQERGITITSAATKCEWKGHTIQIIDTPGHVDFTVEVERSLRVLDGAVAVYDGVAGVEPQTENVWRQADKYNVPRMCFVNKLDRTGADFFRCVQMMVDRLNATPLVLQVPIGLEADHIGVVDLIDMRALTWRGETQKGEDYAVEEIPAELADTAAEWREKLMETLADVDDAVMEKYLEGGEFSVEEIKAAIRRATIAGKANPVLCGSAFKNKGVQPMLDAVVDFLPSPLDIPAIEGTGTDGETPLQRKPSTSEPFSGLAFKIQTDKHLGKLTYMRVYSGVLESGSQVVNSTKDRKERIGKIYQMHANKREERSSAKAGDIIAVQGLKQTTTGDTLCDPANPVILESMTFPEPVIEVAIEPKTKADQEKLSTAIQRLAEEDPTFRVKLDDETGQTVISGMGELHLDILVDRMRREFNVEANIGKPQVAYRETIRRKVEKVEYTHKKQTGGSGQYARVIVSLEPLPLDNDSPTYEFANAVTGGRVPREFIPSVDAGAQDAMQYGILAGFPLVGVKLTLVDGQYHEVDSSEMAFKIAGSMVLKDAARKADPALLEPMMAVEVTTPEENMGDVIGDINSRRGIIQAMEERGGARVVRALVPLSEMFGYVGDLRSKTQGRASYSMQFDSYAEVPASVAKEIIAKATGE.

Positions 8–284 constitute a tr-type G domain; sequence ANVRNIGIMA…AVVDFLPSPL (277 aa). GTP contacts are provided by residues 17-24, 81-85, and 135-138; these read AHIDAGKT, DTPGH, and NKLD. The interval 289–309 is disordered; that stretch reads IEGTGTDGETPLQRKPSTSEP.

This sequence belongs to the TRAFAC class translation factor GTPase superfamily. Classic translation factor GTPase family. EF-G/EF-2 subfamily.

Its subcellular location is the cytoplasm. Functionally, catalyzes the GTP-dependent ribosomal translocation step during translation elongation. During this step, the ribosome changes from the pre-translocational (PRE) to the post-translocational (POST) state as the newly formed A-site-bound peptidyl-tRNA and P-site-bound deacylated tRNA move to the P and E sites, respectively. Catalyzes the coordinated movement of the two tRNA molecules, the mRNA and conformational changes in the ribosome. The protein is Elongation factor G of Salinispora arenicola (strain CNS-205).